A 348-amino-acid polypeptide reads, in one-letter code: Beta-hexosaminidase (348 aa).

Substrate-binding positions include Asp62, Arg70, Arg134, and 164-165 (KH). Catalysis depends on His177, which acts as the Proton donor/acceptor. The active-site Nucleophile is the Asp249.

This sequence belongs to the glycosyl hydrolase 3 family. NagZ subfamily.

The protein localises to the cytoplasm. The enzyme catalyses Hydrolysis of terminal non-reducing N-acetyl-D-hexosamine residues in N-acetyl-beta-D-hexosaminides.. It functions in the pathway cell wall biogenesis; peptidoglycan recycling. Functionally, plays a role in peptidoglycan recycling by cleaving the terminal beta-1,4-linked N-acetylglucosamine (GlcNAc) from peptide-linked peptidoglycan fragments, giving rise to free GlcNAc, anhydro-N-acetylmuramic acid and anhydro-N-acetylmuramic acid-linked peptides. The sequence is that of Beta-hexosaminidase from Histophilus somni (strain 2336) (Haemophilus somnus).